A 404-amino-acid chain; its full sequence is MEKIYSVSEFNRMVKSYIDDIDDFQEFFIEGEISNITYYKSGHLYFSIKDSKSQIKCVAFNYKLKRIPEDLKEGDLVKLFGDVGFYEARGDFQVLARYIEKQNALGSLYAKLEKVKEKLTGLGYFNEEHKKDLPKFPKNIGVVTALTGAALQDIIKTTRKRFNSINIYIYPAKVQGIGAEQEIIKGIETLNKIKEIDFIIAGRGGGSIEDLWAFNEEEVAMAFFNSKKPIISAVGHEIDFLLSDLTADKRAATPTQAIELSVPEKESLLEDLKAREIYITKLLKSYVDSMKRELLLRIENYYLKNFPNTVNSLRESIVEKEIQLKEAMESFIEQKRNIFENKIDKISVLNPINTLKRGYTVSQVKNKRIDVLDDIEINDEMMTILKDGKVISVVKEKIYEKNIN.

Belongs to the XseA family. Heterooligomer composed of large and small subunits.

Its subcellular location is the cytoplasm. The catalysed reaction is Exonucleolytic cleavage in either 5'- to 3'- or 3'- to 5'-direction to yield nucleoside 5'-phosphates.. In terms of biological role, bidirectionally degrades single-stranded DNA into large acid-insoluble oligonucleotides, which are then degraded further into small acid-soluble oligonucleotides. The polypeptide is Exodeoxyribonuclease 7 large subunit (Fusobacterium nucleatum subsp. nucleatum (strain ATCC 25586 / DSM 15643 / BCRC 10681 / CIP 101130 / JCM 8532 / KCTC 2640 / LMG 13131 / VPI 4355)).